A 408-amino-acid polypeptide reads, in one-letter code: Probable 2,3-bisphosphoglycerate-independent phosphoglycerate mutase (408 aa).

This sequence belongs to the BPG-independent phosphoglycerate mutase family. A-PGAM subfamily.

It carries out the reaction (2R)-2-phosphoglycerate = (2R)-3-phosphoglycerate. It functions in the pathway carbohydrate degradation; glycolysis; pyruvate from D-glyceraldehyde 3-phosphate: step 3/5. Functionally, catalyzes the interconversion of 2-phosphoglycerate and 3-phosphoglycerate. The chain is Probable 2,3-bisphosphoglycerate-independent phosphoglycerate mutase from Deinococcus geothermalis (strain DSM 11300 / CIP 105573 / AG-3a).